Consider the following 129-residue polypeptide: N16.2 matrix protein (129 aa).

The N-terminal stretch at 1 to 23 is a signal peptide; it reads MKCTLRWTITALVLLGICHLARP. A run of 5 repeats spans residues 91-92, 93-94, 95-96, 97-98, and 99-100. Residues 91–100 are 5 X 2 AA tandem repeats of N-G; it reads NGNGDGNGNG.

It belongs to the N16 matrix protein family. Heterooligomer; disulfide-linked. Pif97, Pif80, N16 and other proteins form a complex. In terms of tissue distribution, component of conchiolin, the organic matrix of nacre. Expressed at extremely high levels in the dorsal region of the mantle, which region may be responsible for the nacreous layer formation, but only in trace amounts at the mantle edge, which region may be responsible for the prismatic layer formation.

It localises to the secreted. The protein localises to the extracellular space. It is found in the extracellular matrix. Its function is as follows. May be specifically involved in the formation of the nacreous layer. The polypeptide is N16.2 matrix protein (Pinctada fucata (Akoya pearl oyster)).